A 418-amino-acid polypeptide reads, in one-letter code: Serine--tRNA ligase (418 aa).

231-233 (TAE) serves as a coordination point for L-serine. 262–264 (RRE) lines the ATP pocket. L-serine is bound at residue E285. 349–352 (EISS) lines the ATP pocket. S384 serves as a coordination point for L-serine.

This sequence belongs to the class-II aminoacyl-tRNA synthetase family. Type-1 seryl-tRNA synthetase subfamily. As to quaternary structure, homodimer. The tRNA molecule binds across the dimer.

It is found in the cytoplasm. The catalysed reaction is tRNA(Ser) + L-serine + ATP = L-seryl-tRNA(Ser) + AMP + diphosphate + H(+). The enzyme catalyses tRNA(Sec) + L-serine + ATP = L-seryl-tRNA(Sec) + AMP + diphosphate + H(+). It participates in aminoacyl-tRNA biosynthesis; selenocysteinyl-tRNA(Sec) biosynthesis; L-seryl-tRNA(Sec) from L-serine and tRNA(Sec): step 1/1. Catalyzes the attachment of serine to tRNA(Ser). Is also able to aminoacylate tRNA(Sec) with serine, to form the misacylated tRNA L-seryl-tRNA(Sec), which will be further converted into selenocysteinyl-tRNA(Sec). The protein is Serine--tRNA ligase of Coprothermobacter proteolyticus (strain ATCC 35245 / DSM 5265 / OCM 4 / BT).